The chain runs to 294 residues: 33 kDa chaperonin (294 aa).

2 cysteine pairs are disulfide-bonded: cysteine 236–cysteine 238 and cysteine 269–cysteine 272.

Belongs to the HSP33 family. In terms of processing, under oxidizing conditions two disulfide bonds are formed involving the reactive cysteines. Under reducing conditions zinc is bound to the reactive cysteines and the protein is inactive.

It localises to the cytoplasm. Functionally, redox regulated molecular chaperone. Protects both thermally unfolding and oxidatively damaged proteins from irreversible aggregation. Plays an important role in the bacterial defense system toward oxidative stress. In Desulforamulus reducens (strain ATCC BAA-1160 / DSM 100696 / MI-1) (Desulfotomaculum reducens), this protein is 33 kDa chaperonin.